Here is a 549-residue protein sequence, read N- to C-terminus: Glucose-6-phosphate isomerase (549 aa).

Glutamate 352 functions as the Proton donor in the catalytic mechanism. Active-site residues include histidine 383 and lysine 511.

It belongs to the GPI family.

It is found in the cytoplasm. It carries out the reaction alpha-D-glucose 6-phosphate = beta-D-fructose 6-phosphate. It participates in carbohydrate biosynthesis; gluconeogenesis. Its pathway is carbohydrate degradation; glycolysis; D-glyceraldehyde 3-phosphate and glycerone phosphate from D-glucose: step 2/4. In terms of biological role, catalyzes the reversible isomerization of glucose-6-phosphate to fructose-6-phosphate. The chain is Glucose-6-phosphate isomerase from Methylocella silvestris (strain DSM 15510 / CIP 108128 / LMG 27833 / NCIMB 13906 / BL2).